We begin with the raw amino-acid sequence, 166 residues long: Lactose-binding lectin l-2 (166 aa).

The signal sequence occupies residues 1-24 (MVSFKLPAFLCVAVLSSMALVSHG). 3 disulfide bridges follow: cysteine 34–cysteine 45, cysteine 62–cysteine 160, and cysteine 136–cysteine 152. One can recognise a C-type lectin domain in the interval 41–161 (HKNRCYLHVA…CDLLFPSICV (121 aa)).

As to quaternary structure, homodimer; disulfide-linked. In terms of tissue distribution, skin; contained within club cells which are a component of the epidermis in combination with epithelial cells and mucus cells (at protein level).

It is found in the secreted. Functionally, involved in host defense at the body surface. Causes agglutination and suppresses the growth of the Gram-negative bacterium E.coli K12. Possesses calcium-independent hemagglutinating activity. The sequence is that of Lactose-binding lectin l-2 from Anguilla japonica (Japanese eel).